We begin with the raw amino-acid sequence, 233 residues long: Phosphoenolpyruvate guanylyltransferase 1 (233 aa).

Phosphoenolpyruvate is bound by residues Thr154, Gly171, and Ser174.

Belongs to the CofC family.

The enzyme catalyses phosphoenolpyruvate + GTP + H(+) = enolpyruvoyl-2-diphospho-5'-guanosine + diphosphate. Its pathway is cofactor biosynthesis; coenzyme F420 biosynthesis. Guanylyltransferase that catalyzes the activation of phosphoenolpyruvate (PEP) as enolpyruvoyl-2-diphospho-5'-guanosine, via the condensation of PEP with GTP. It is involved in the biosynthesis of coenzyme F420, a hydride carrier cofactor. The polypeptide is Phosphoenolpyruvate guanylyltransferase 1 (Rhodococcus jostii (strain RHA1)).